A 186-amino-acid polypeptide reads, in one-letter code: MKLIVGLGNPGREYELTRHNIGFMAIDELAKRWNISLNEQKFKGVFGAGFVNGEKVILLKPLTYMNLSGESIRPLMDYYKIDVEDFVVMYDDLDIPVGKLRLRMKGSAGGHNGVKSTISHLGTQEFQRIRMGIDRPKNGMKVVDYVLGRFTSEEIPDVNHSIEKAADACEEWLNKPFLQIMNTFNS.

Position 14 (Tyr14) interacts with tRNA. The active-site Proton acceptor is His19. Positions 64, 66, and 112 each coordinate tRNA.

Belongs to the PTH family. As to quaternary structure, monomer.

The protein resides in the cytoplasm. It catalyses the reaction an N-acyl-L-alpha-aminoacyl-tRNA + H2O = an N-acyl-L-amino acid + a tRNA + H(+). Hydrolyzes ribosome-free peptidyl-tRNAs (with 1 or more amino acids incorporated), which drop off the ribosome during protein synthesis, or as a result of ribosome stalling. Functionally, catalyzes the release of premature peptidyl moieties from peptidyl-tRNA molecules trapped in stalled 50S ribosomal subunits, and thus maintains levels of free tRNAs and 50S ribosomes. In Bacillus cereus (strain ATCC 14579 / DSM 31 / CCUG 7414 / JCM 2152 / NBRC 15305 / NCIMB 9373 / NCTC 2599 / NRRL B-3711), this protein is Peptidyl-tRNA hydrolase.